A 290-amino-acid polypeptide reads, in one-letter code: Bifunctional protein FolD 1 (290 aa).

NADP(+) contacts are provided by residues 164-166 (GRS), Ile-193, and Ile-236.

It belongs to the tetrahydrofolate dehydrogenase/cyclohydrolase family. Homodimer.

The catalysed reaction is (6R)-5,10-methylene-5,6,7,8-tetrahydrofolate + NADP(+) = (6R)-5,10-methenyltetrahydrofolate + NADPH. It carries out the reaction (6R)-5,10-methenyltetrahydrofolate + H2O = (6R)-10-formyltetrahydrofolate + H(+). Its pathway is one-carbon metabolism; tetrahydrofolate interconversion. Catalyzes the oxidation of 5,10-methylenetetrahydrofolate to 5,10-methenyltetrahydrofolate and then the hydrolysis of 5,10-methenyltetrahydrofolate to 10-formyltetrahydrofolate. The protein is Bifunctional protein FolD 1 of Geobacter metallireducens (strain ATCC 53774 / DSM 7210 / GS-15).